The following is a 341-amino-acid chain: MRALYFRTTTLSTFFILCSLASNDIPRTGGNKIVQPPKPNILKQGCPSDLLHSRALRSIQLACRSHPATVISAFEGIQEGLQNCANRLRFQQWDCSEAGNIMHDPPLLRQGFRESSLIWALSSASAAWGVATACAQGWIDDCACNNHMGQNEYEFGGCTHGVQHGITASRKLLTKVGAVNSLLRKVEKHNLKAGRLAIKKTLISSCKCHGVSGSCQQKTCWKRTATLEHITDYLVEKYARAKLYTDDSVVKTTDLIYLEASPDVCKVKSVAGRVCAWRNETHTQGDCDRLCCGNGFSIRHEVVRVKCDCEFVWCCNLVCKDCIQHRWISTCNGTPPKSLIF.

The N-terminal stretch at 1–21 (MRALYFRTTTLSTFFILCSLA) is a signal peptide. 11 disulfides stabilise this stretch: cysteine 84–cysteine 95, cysteine 134–cysteine 142, cysteine 144–cysteine 158, cysteine 206–cysteine 220, cysteine 208–cysteine 215, cysteine 265–cysteine 292, cysteine 275–cysteine 287, cysteine 291–cysteine 331, cysteine 307–cysteine 322, cysteine 309–cysteine 319, and cysteine 314–cysteine 315. The O-palmitoleoyl serine; by mom-1 moiety is linked to residue serine 212. Asparagine 279 is a glycosylation site (N-linked (GlcNAc...) asparagine).

It belongs to the Wnt family. In terms of processing, palmitoleoylation is required for efficient binding to frizzled receptors. Depalmitoleoylation leads to Wnt signaling pathway inhibition.

The protein localises to the secreted. It is found in the extracellular space. Its subcellular location is the extracellular matrix. Functionally, ligand for members of the frizzled family of seven transmembrane receptors. Affects male tail development, vulval precursor cell specification and egg laying. Involved in morphogenesis by influencing polarity of asymmetric cell divisions of the B, U, and F cells in the male, and the T cell in males and hermaphrodites. Controls spindle orientation in B-gamma cell division during male copulatory spicule development. Involved in specification of the P7.p lineage during vulval development. Has a role in providing polarity and default lin-17 localization in axon development and positioning of neuromuscular synapses in DA9 regions by negatively regulating synaptogenesis. The protein is Abnormal cell lineage protein 44 of Caenorhabditis briggsae.